A 117-amino-acid chain; its full sequence is Large ribosomal subunit protein bL20c (117 aa).

This sequence belongs to the bacterial ribosomal protein bL20 family.

The protein localises to the plastid. It is found in the chloroplast. Binds directly to 23S ribosomal RNA and is necessary for the in vitro assembly process of the 50S ribosomal subunit. It is not involved in the protein synthesizing functions of that subunit. The protein is Large ribosomal subunit protein bL20c of Carica papaya (Papaya).